Reading from the N-terminus, the 361-residue chain is Peptide chain release factor 1 (361 aa).

Position 237 is an N5-methylglutamine (Gln237). The segment at 283–307 (AQQQEQQEQQSSTRKELIGSGDRSQ) is disordered.

The protein belongs to the prokaryotic/mitochondrial release factor family. In terms of processing, methylated by PrmC. Methylation increases the termination efficiency of RF1.

It is found in the cytoplasm. Functionally, peptide chain release factor 1 directs the termination of translation in response to the peptide chain termination codons UAG and UAA. This is Peptide chain release factor 1 from Vesicomyosocius okutanii subsp. Calyptogena okutanii (strain HA).